We begin with the raw amino-acid sequence, 99 residues long: DNA-binding protein Fis (99 aa).

The segment at residues 75–94 is a DNA-binding region (H-T-H motif); sequence QTRAANMLGINRGTLRKKLK.

The protein belongs to the transcriptional regulatory Fis family. As to quaternary structure, homodimer.

Activates ribosomal RNA transcription. Plays a direct role in upstream activation of rRNA promoters. In Haemophilus influenzae (strain PittEE), this protein is DNA-binding protein Fis.